The sequence spans 115 residues: Con-Ins T2 (115 aa).

An N-terminal signal peptide occupies residues 1–21 (MTTSFYFLLVALGLLLYVCQS). Residues 22 to 29 (SFGNQHTR) constitute a propeptide that is removed on maturation. 3 disulfide bridges follow: Cys38–Cys101, Cys50–Cys114, and Cys100–Cys105. Glu48 carries the post-translational modification 4-carboxyglutamate. The propeptide at 53-94 (KRNDAGKKRGQASPLWQRGGSLSMLKARAKRNEAFHLQRAHR) is c peptide. Glu98 carries the 4-carboxyglutamate modification. At Glu109 the chain carries 4-carboxyglutamate. Position 114 is a cysteine amide (Cys114).

This sequence belongs to the insulin family. Heterodimer of A and B chains; disulfide-linked. Expressed by the venom gland.

Its subcellular location is the secreted. In terms of biological role, this venom insulin facilitates prey capture by rapidly inducing hypoglycemic shock. It is one of the smallest known insulin found in nature and lacks the C-terminal segment of the B chain that, in human insulin, mediates engagement of the insulin receptor (INSR) and assembly of the hormone's hexameric storage form. Despite lacking this segment, it both binds and activates human insulin receptor (long isoform (HIR-B)) with a high potency (EC(50)=15.5 nM). In vivo, intraperitoneal injection of this peptide into zebrafish lowers blood glucose with a lower potency than human insulin. In addition, when applied to water, this peptide reduces overall locomotor activity of zebrafish larvae, observed as a significant decrease in the percentage of time spent swimming and movement frequency. When tested on a mouse model of diabetes, this insulin also lowers blood glucose with a 10-fold lower potency than human insulin. In Conus tulipa (Fish-hunting cone snail), this protein is Con-Ins T2.